The following is an 897-amino-acid chain: Probable basic-leucine zipper transcription factor R (897 aa).

Disordered stretches follow at residues 38 to 88 (DDNI…NIET) and 128 to 198 (YQQR…NSNS). Residues 44–75 (NNNNNNNNNNNNNNNNNNNNNNNNNNNNNNNN) show a composition bias toward low complexity. Polar residues predominate over residues 76–88 (IGSPQIMNENIET). Residues 94–137 (QYLERLQSIQQQQHQCQTQIQQQLQNYQQQYEDQYQQRQQQYQD) are a coiled coil. Residues 128–140 (YQQRQQQYQDQYQ) are compositionally biased toward low complexity. Residues 141–157 (KPYSSPPLNFNSIPPIT) are compositionally biased toward polar residues. A compositionally biased stretch (low complexity) spans 158–198 (NNNNNNNNNNNNNNNNNNSNSNSNSNSNSNSNSNSNSNSNS). 2 coiled-coil regions span residues 228–258 (LQQQQQQQQQQQQQQQQQQQQQQQQQQQQQQ) and 330–407 (QQLQ…QQQQ). Positions 461-516 (LQLPTPFYSPQQQQQQHTPISSFIPPPSLPSSPPSPPSPPSPPPQQQQQQQQQQQQ) are disordered. Over residues 484–505 (IPPPSLPSSPPSPPSPPSPPPQ) the composition is skewed to pro residues. Over residues 506–516 (QQQQQQQQQQQ) the composition is skewed to low complexity. The region spanning 557–620 (ESKESIKKYN…SIEMMRMEPE (64 aa)) is the bZIP domain. The basic motif stretch occupies residues 559–564 (KESIKK). The segment at 569 to 576 (IASRNYRL) is leucine-zipper.

This sequence belongs to the bZIP family.

It is found in the nucleus. Probable transcriptional regulator. In Dictyostelium discoideum (Social amoeba), this protein is Probable basic-leucine zipper transcription factor R (bzpR).